A 181-amino-acid polypeptide reads, in one-letter code: ATP synthase subunit delta (181 aa).

This sequence belongs to the ATPase delta chain family. As to quaternary structure, F-type ATPases have 2 components, F(1) - the catalytic core - and F(0) - the membrane proton channel. F(1) has five subunits: alpha(3), beta(3), gamma(1), delta(1), epsilon(1). F(0) has three main subunits: a(1), b(2) and c(10-14). The alpha and beta chains form an alternating ring which encloses part of the gamma chain. F(1) is attached to F(0) by a central stalk formed by the gamma and epsilon chains, while a peripheral stalk is formed by the delta and b chains.

The protein resides in the cell inner membrane. Functionally, f(1)F(0) ATP synthase produces ATP from ADP in the presence of a proton or sodium gradient. F-type ATPases consist of two structural domains, F(1) containing the extramembraneous catalytic core and F(0) containing the membrane proton channel, linked together by a central stalk and a peripheral stalk. During catalysis, ATP synthesis in the catalytic domain of F(1) is coupled via a rotary mechanism of the central stalk subunits to proton translocation. In terms of biological role, this protein is part of the stalk that links CF(0) to CF(1). It either transmits conformational changes from CF(0) to CF(1) or is implicated in proton conduction. In Hyphomonas neptunium (strain ATCC 15444), this protein is ATP synthase subunit delta.